The following is a 100-amino-acid chain: KRLLQDLNIKINQVIPEGGSVQDLQNLPKAWFNLVPYREVGLMTAIYLEKNFGMPYISTTPMGIVDIAECIRQIQKHVNNLALNQTFNYESYIDQQTRFV.

The protein belongs to the ChlB/BchB/BchZ family. As to quaternary structure, protochlorophyllide reductase is composed of three subunits; ChlL, ChlN and ChlB. Forms a heterotetramer of two ChlB and two ChlN subunits. The cofactor is [4Fe-4S] cluster.

It is found in the plastid. Its subcellular location is the chloroplast. The enzyme catalyses chlorophyllide a + oxidized 2[4Fe-4S]-[ferredoxin] + 2 ADP + 2 phosphate = protochlorophyllide a + reduced 2[4Fe-4S]-[ferredoxin] + 2 ATP + 2 H2O. The protein operates within porphyrin-containing compound metabolism; chlorophyll biosynthesis (light-independent). Functionally, component of the dark-operative protochlorophyllide reductase (DPOR) that uses Mg-ATP and reduced ferredoxin to reduce ring D of protochlorophyllide (Pchlide) to form chlorophyllide a (Chlide). This reaction is light-independent. The NB-protein (ChlN-ChlB) is the catalytic component of the complex. The chain is Light-independent protochlorophyllide reductase subunit B (chlB) from Polytrichum commune (Haircap moss).